A 376-amino-acid chain; its full sequence is DnaJ homolog subfamily B member 12 (376 aa).

N-acetylmethionine is present on Met1. A disordered region spans residues 45 to 97; sequence ALIESLNQKPQSTGDHPQPTDTTHTTTKKAGGTETPSANGEAGGGESAKGYTS. The span at 57–84 shows a compositional bias: low complexity; it reads TGDHPQPTDTTHTTTKKAGGTETPSANG. The J domain maps to 111 to 175; sequence DYYEILGVSR…EKRKQYDQFG (65 aa). His186 is subject to Pros-methylhistidine. A helical membrane pass occupies residues 243–263; that stretch reads GGLGVFVQLMPILILILVSAL.

The protein belongs to the DnaJ family. DNAJB12/DNAJB14 subfamily. Homodimer and homotetramer. Interacts (via J domain) with HSPA8/Hsc70. Forms a multiprotein complex, at least composed of DNAJB12, DNAJB14, HSPA8/Hsc70 and SGTA; interaction with DNAJB14 and HSPA8/Hsc70 is direct. Methylated at His-186 by METTL9.

The protein localises to the endoplasmic reticulum membrane. It localises to the nucleus membrane. Functionally, acts as a co-chaperone with HSPA8/Hsc70; required to promote protein folding and trafficking, prevent aggregation of client proteins, and promote unfolded proteins to endoplasmic reticulum-associated degradation (ERAD) pathway. Acts by determining HSPA8/Hsc70's ATPase and polypeptide-binding activities. Can also act independently of HSPA8/Hsc70: together with DNAJB14, acts as a chaperone that promotes maturation of potassium channels KCND2 and KCNH2 by stabilizing nascent channel subunits and assembling them into tetramers. While stabilization of nascent channel proteins is dependent on HSPA8/Hsc70, the process of oligomerization of channel subunits is independent of HSPA8/Hsc70. When overexpressed, forms membranous structures together with DNAJB14 and HSPA8/Hsc70 within the nucleus; the role of these structures, named DJANGOs, is still unclear. In Mus musculus (Mouse), this protein is DnaJ homolog subfamily B member 12.